Consider the following 379-residue polypeptide: Chorismate synthase (379 aa).

NADP(+) contacts are provided by Arg48 and Arg54. Residues 125–127 (RSS), 241–242 (NA), Gly286, 301–305 (KPTSS), and Arg327 contribute to the FMN site.

This sequence belongs to the chorismate synthase family. Homotetramer. The cofactor is FMNH2.

The enzyme catalyses 5-O-(1-carboxyvinyl)-3-phosphoshikimate = chorismate + phosphate. Its pathway is metabolic intermediate biosynthesis; chorismate biosynthesis; chorismate from D-erythrose 4-phosphate and phosphoenolpyruvate: step 7/7. Functionally, catalyzes the anti-1,4-elimination of the C-3 phosphate and the C-6 proR hydrogen from 5-enolpyruvylshikimate-3-phosphate (EPSP) to yield chorismate, which is the branch point compound that serves as the starting substrate for the three terminal pathways of aromatic amino acid biosynthesis. This reaction introduces a second double bond into the aromatic ring system. The protein is Chorismate synthase of Rhodospirillum centenum (strain ATCC 51521 / SW).